The primary structure comprises 129 residues: uncharacterized protein (129 aa).

K121 is covalently cross-linked (Isoglutamyl lysine isopeptide (Lys-Gln) (interchain with Q-Cter in protein Pup)).

This is an uncharacterized protein from Mycolicibacterium smegmatis (strain ATCC 700084 / mc(2)155) (Mycobacterium smegmatis).